Here is a 157-residue protein sequence, read N- to C-terminus: Probable succinate transporter subunit YjjB (157 aa).

Transmembrane regions (helical) follow at residues leucine 8 to phenylalanine 28, methionine 50 to valine 70, valine 87 to isoleucine 107, and phenylalanine 129 to tryptophan 149.

It belongs to the ThrE exporter (TC 2.A.79) family. In terms of assembly, the transporter is composed of YjjB and YjjP.

The protein resides in the cell inner membrane. Its function is as follows. Involved in succinate export with YjjP. Both proteins are required for export. The polypeptide is Probable succinate transporter subunit YjjB (Escherichia coli O1:K1 / APEC).